Reading from the N-terminus, the 214-residue chain is tRNA (guanine-N(7)-)-methyltransferase (214 aa).

Positions 45, 70, 97, and 119 each coordinate S-adenosyl-L-methionine. Lys123 is a binding site for substrate. Residues 125 to 130 are interaction with RNA; sequence RHNKRR. Residues Asp155 and 193 to 196 contribute to the substrate site; that span reads TEYE.

Belongs to the class I-like SAM-binding methyltransferase superfamily. TrmB family.

The enzyme catalyses guanosine(46) in tRNA + S-adenosyl-L-methionine = N(7)-methylguanosine(46) in tRNA + S-adenosyl-L-homocysteine. The protein operates within tRNA modification; N(7)-methylguanine-tRNA biosynthesis. Functionally, catalyzes the formation of N(7)-methylguanine at position 46 (m7G46) in tRNA. In Clostridium novyi (strain NT), this protein is tRNA (guanine-N(7)-)-methyltransferase.